Consider the following 205-residue polypeptide: High frequency lysogenization protein HflD homolog (205 aa).

Belongs to the HflD family.

It localises to the cytoplasm. The protein resides in the cell inner membrane. This is High frequency lysogenization protein HflD homolog from Shewanella halifaxensis (strain HAW-EB4).